A 274-amino-acid polypeptide reads, in one-letter code: MTDGLVRLRLDLSYDGTPFAGWARQPGQRTVQGDVEDALMRVARLPAVRLTVAGRTDSGVHAVGQVAHVDLPDDVPLGGLARRLNGVLDRAVRIIGLAPAPPGFDARFSALSRRYVYRITDAPYGAEPLRRFDTLAWPRPLDVPAMAAAALFLVGEHDFAAFCRRREGATTVRTLLRLDVLRRPEGVVVADVEADAFCHSMVRALVGALLAVGEGRKPPQWPAAVLHRGVRDPAVTVAPAHGLTLVDVRYPPDPELAARAEVTRAVRIPPTPSG.

Aspartate 57 serves as the catalytic Nucleophile. Tyrosine 115 serves as a coordination point for substrate.

This sequence belongs to the tRNA pseudouridine synthase TruA family. In terms of assembly, homodimer.

The enzyme catalyses uridine(38/39/40) in tRNA = pseudouridine(38/39/40) in tRNA. Functionally, formation of pseudouridine at positions 38, 39 and 40 in the anticodon stem and loop of transfer RNAs. In Frankia casuarinae (strain DSM 45818 / CECT 9043 / HFP020203 / CcI3), this protein is tRNA pseudouridine synthase A.